A 25-amino-acid chain; its full sequence is Neuromedin-U-25 (25 aa).

Asparagine 25 carries the post-translational modification Asparagine amide.

The protein belongs to the NmU family.

The protein localises to the secreted. Stimulates uterine smooth muscle contraction and causes selective vasoconstriction. This is Neuromedin-U-25 (NMU) from Gallus gallus (Chicken).